Reading from the N-terminus, the 271-residue chain is Bis(5'-nucleosyl)-tetraphosphatase, symmetrical (271 aa).

This sequence belongs to the Ap4A hydrolase family.

It carries out the reaction P(1),P(4)-bis(5'-adenosyl) tetraphosphate + H2O = 2 ADP + 2 H(+). Hydrolyzes diadenosine 5',5'''-P1,P4-tetraphosphate to yield ADP. In Aliivibrio fischeri (strain ATCC 700601 / ES114) (Vibrio fischeri), this protein is Bis(5'-nucleosyl)-tetraphosphatase, symmetrical.